A 381-amino-acid polypeptide reads, in one-letter code: Cytochrome b (381 aa).

Transmembrane regions (helical) follow at residues 32-52 (GGSLAGMMLASQMLTGILLAM), 76-98 (MILRYAHANGASLFFIVVYLHVL), 113-133 (VWISGVVILLVMIITAFIGYV), and 179-199 (FYSFHYTLPFILAGLSVFHIA). Residues H82 and H96 each contribute to the heme b site. H183 and H197 together coordinate heme b. H202 is a binding site for a ubiquinone. 4 helical membrane-spanning segments follow: residues 225–245 (FGAKDLVGALFLALVFSILVF), 289–309 (AMGVLAIGLVFASLFAMPFIG), 318–338 (ITEWLYWTFLADVLLLTWLGG), and 345–365 (TSFVGQCCTAYLFFYLLVCQP).

The protein belongs to the cytochrome b family. The main subunits of complex b-c1 are: cytochrome b, cytochrome c1 and the Rieske protein. The cofactor is heme b.

It localises to the mitochondrion inner membrane. In terms of biological role, component of the ubiquinol-cytochrome c reductase complex (complex III or cytochrome b-c1 complex) that is part of the mitochondrial respiratory chain. The b-c1 complex mediates electron transfer from ubiquinol to cytochrome c. Contributes to the generation of a proton gradient across the mitochondrial membrane that is then used for ATP synthesis. This is Cytochrome b (MT-CYB) from Chlamydomonas reinhardtii (Chlamydomonas smithii).